The primary structure comprises 384 residues: Gastrin-releasing peptide receptor (384 aa).

Residues 1–39 (MDPNNCSHLNLEVDPFLSCNNTFNQTLNPPKMDNWFHPG) lie on the Extracellular side of the membrane. 3 N-linked (GlcNAc...) asparagine glycosylation sites follow: Asn-5, Asn-20, and Asn-24. A helical membrane pass occupies residues 40–63 (IIYVIPAVYGLIIVIGLIGNITLI). Over 64-77 (KIFCTVKSMRNVPN) the chain is Cytoplasmic. The helical transmembrane segment at 78-97 (LFISSLALGDLLLLVTCAPV) threads the bilayer. The Extracellular portion of the chain corresponds to 98–115 (DASKYLADRWLFGRIGCK). Cys-114 and Cys-197 are joined by a disulfide. The chain crosses the membrane as a helical span at residues 116 to 137 (LIPFIQLTSVGVSVFTLTALSA). Residues 138–153 (DRYKAIVRPMDIQASH) are Cytoplasmic-facing. A helical membrane pass occupies residues 154-175 (ALMKICLKAALIWIVSMLLAIP). The Extracellular portion of the chain corresponds to 176–209 (EAVFSDLHPFHVKDTNQTFISCAPYPHSNELHPK). The chain crosses the membrane as a helical span at residues 210–235 (IHSMASFLVFYIIPLSIISVYYYFIA). The Cytoplasmic segment spans residues 236–265 (RNLIQSAYNLPVEGNIHVKKQIESRKRLAK). A helical membrane pass occupies residues 266–286 (TVLVFVGLFAFCWLPNHVIYL). Residues 287–299 (YRSYHYSEVDTSM) are Extracellular-facing. A helical membrane pass occupies residues 300–326 (LHFITSICARLLAFTNSCVNPFALYLL). Over 327-384 (SKSFRKQFNTQLLCCQPSLLNRSHSTGRSTTCMTSFKSTNPSATFSLINGNICHEGYV) the chain is Cytoplasmic. The S-palmitoyl cysteine moiety is linked to residue Cys-340. At Ser-351 the chain carries Phosphoserine.

The protein belongs to the G-protein coupled receptor 1 family. As to expression, expressed in the hippocampal CA1 region (at protein level).

It is found in the cell membrane. Receptor for gastrin-releasing peptide (GRP). Signals via association with G proteins that activate a phosphatidylinositol-calcium second messenger system, resulting in Akt phosphorylation. Contributes to the regulation of food intake. Contributes to the perception of prurient stimuli and transmission of itch signals in the spinal cord that promote scratching behavior, but does not play a role in the perception of pain. Contributes primarily to nonhistaminergic itch sensation. In one study, shown to act in the amygdala as part of an inhibitory network which inhibits memory specifically related to learned fear. In another study, shown to contribute to disinhibition of glutamatergic cells in the auditory cortex via signaling on vasoactive intestinal peptide-expressing cells which leads to enhanced auditory fear memories. Contributes to the induction of sighing through signaling in the pre-Botzinger complex, a cluster of several thousand neurons in the ventrolateral medulla responsible for inspiration during respiratory activity. In Rattus norvegicus (Rat), this protein is Gastrin-releasing peptide receptor (Grpr).